The chain runs to 1343 residues: DNA-directed RNA polymerase subunit beta (1343 aa).

This sequence belongs to the RNA polymerase beta chain family. In terms of assembly, the RNAP catalytic core consists of 2 alpha, 1 beta, 1 beta' and 1 omega subunit. When a sigma factor is associated with the core the holoenzyme is formed, which can initiate transcription.

The catalysed reaction is RNA(n) + a ribonucleoside 5'-triphosphate = RNA(n+1) + diphosphate. Its function is as follows. DNA-dependent RNA polymerase catalyzes the transcription of DNA into RNA using the four ribonucleoside triphosphates as substrates. The sequence is that of DNA-directed RNA polymerase subunit beta from Shewanella baltica (strain OS155 / ATCC BAA-1091).